A 570-amino-acid chain; its full sequence is 2-succinyl-5-enolpyruvyl-6-hydroxy-3-cyclohexene-1-carboxylate synthase (570 aa).

Belongs to the TPP enzyme family. MenD subfamily. As to quaternary structure, homodimer. Mg(2+) is required as a cofactor. It depends on Mn(2+) as a cofactor. Requires thiamine diphosphate as cofactor.

The catalysed reaction is isochorismate + 2-oxoglutarate + H(+) = 5-enolpyruvoyl-6-hydroxy-2-succinyl-cyclohex-3-ene-1-carboxylate + CO2. Its pathway is quinol/quinone metabolism; 1,4-dihydroxy-2-naphthoate biosynthesis; 1,4-dihydroxy-2-naphthoate from chorismate: step 2/7. The protein operates within quinol/quinone metabolism; menaquinone biosynthesis. Catalyzes the thiamine diphosphate-dependent decarboxylation of 2-oxoglutarate and the subsequent addition of the resulting succinic semialdehyde-thiamine pyrophosphate anion to isochorismate to yield 2-succinyl-5-enolpyruvyl-6-hydroxy-3-cyclohexene-1-carboxylate (SEPHCHC). The protein is 2-succinyl-5-enolpyruvyl-6-hydroxy-3-cyclohexene-1-carboxylate synthase of Vibrio cholerae serotype O1 (strain ATCC 39541 / Classical Ogawa 395 / O395).